We begin with the raw amino-acid sequence, 197 residues long: Inner membrane-spanning protein YciB (197 aa).

The next 5 helical transmembrane spans lie at 36–56 (IYSA…ALFL), 64–84 (GQWL…TFHS), 90–110 (WKAP…HFIG), 135–155 (LAWI…AFTF), and 162–182 (FKVF…GVYL).

Belongs to the YciB family.

The protein resides in the cell inner membrane. Functionally, plays a role in cell envelope biogenesis, maintenance of cell envelope integrity and membrane homeostasis. This Pseudomonas putida (strain GB-1) protein is Inner membrane-spanning protein YciB.